The following is a 147-amino-acid chain: Glucosamine 6-phosphate N-acetyltransferase (147 aa).

One can recognise an N-acetyltransferase domain in the interval 7–147 (LELRVLEESD…AHERQMRLDL (141 aa)). D-glucosamine 6-phosphate contacts are provided by residues Thr-28 and 86 to 88 (EDV). Acetyl-CoA-binding positions include 88–90 (VVV) and 96–101 (GAGLGK). D-glucosamine 6-phosphate-binding positions include 117 to 118 (YK) and Asp-122. 131 to 133 (YEK) is a binding site for acetyl-CoA.

It belongs to the acetyltransferase family. GNA1 subfamily. As to quaternary structure, homodimer. Contains poly-N-acetyllactosamines.

It is found in the glycosome. It carries out the reaction D-glucosamine 6-phosphate + acetyl-CoA = N-acetyl-D-glucosamine 6-phosphate + CoA + H(+). Its pathway is nucleotide-sugar biosynthesis; UDP-N-acetyl-alpha-D-glucosamine biosynthesis; N-acetyl-alpha-D-glucosamine 1-phosphate from alpha-D-glucosamine 6-phosphate (route I): step 1/2. Functionally, involved in the biosynthesis of UDP-N-acetyl-alpha-D-glucosamine. Catalyzes the formation of N-acetyl-D-glucosamine 6-phosphate from acetyl-coenzyme A (acetyl-CoA) and D-glucosamine 6-phosphate. The chain is Glucosamine 6-phosphate N-acetyltransferase from Trypanosoma brucei brucei.